Consider the following 332-residue polypeptide: Ribosomal RNA small subunit methyltransferase C (332 aa).

This sequence belongs to the methyltransferase superfamily. RsmC family. As to quaternary structure, monomer.

The protein localises to the cytoplasm. The enzyme catalyses guanosine(1207) in 16S rRNA + S-adenosyl-L-methionine = N(2)-methylguanosine(1207) in 16S rRNA + S-adenosyl-L-homocysteine + H(+). In terms of biological role, specifically methylates the guanine in position 1207 of 16S rRNA in the 30S particle. This is Ribosomal RNA small subunit methyltransferase C from Stutzerimonas stutzeri (strain A1501) (Pseudomonas stutzeri).